The chain runs to 148 residues: Deoxyuridine 5'-triphosphate nucleotidohydrolase (148 aa).

Substrate is bound by residues 65 to 67, Asn78, 82 to 84, and Lys92; these read RSG and TID.

The protein belongs to the dUTPase family. Requires Mg(2+) as cofactor.

It carries out the reaction dUTP + H2O = dUMP + diphosphate + H(+). Its pathway is pyrimidine metabolism; dUMP biosynthesis; dUMP from dCTP (dUTP route): step 2/2. Its function is as follows. This enzyme is involved in nucleotide metabolism: it produces dUMP, the immediate precursor of thymidine nucleotides and it decreases the intracellular concentration of dUTP so that uracil cannot be incorporated into DNA. This chain is Deoxyuridine 5'-triphosphate nucleotidohydrolase, found in Chlorobium phaeovibrioides (strain DSM 265 / 1930) (Prosthecochloris vibrioformis (strain DSM 265)).